The following is a 220-amino-acid chain: Serine protease-like protein 51 (220 aa).

The signal sequence occupies residues 1–16 (MFQLLIPLLLALKGHA). The region spanning 23 to 220 (VQCGHRPAFP…SSKWVSSVGA (198 aa)) is the Peptidase S1 domain. A glycan (N-linked (GlcNAc...) asparagine) is linked at Asn33. A disulfide bridge connects residues Cys64 and Cys80. Residue Asn92 is glycosylated (N-linked (GlcNAc...) asparagine). A disulfide bond links Cys157 and Cys170.

It belongs to the peptidase S1 family.

The protein resides in the secreted. This chain is Serine protease-like protein 51, found in Homo sapiens (Human).